The chain runs to 200 residues: uncharacterized protein (200 aa).

This is an uncharacterized protein from Ureaplasma parvum serovar 3 (strain ATCC 700970).